Consider the following 207-residue polypeptide: Large ribosomal subunit protein uL4 (207 aa).

The disordered stretch occupies residues 48–78 (THKVKTRSEVRGGGRKPWRQKGTGRARQGSI). A compositionally biased stretch (basic residues) spans 60–71 (GGRKPWRQKGTG).

It belongs to the universal ribosomal protein uL4 family. In terms of assembly, part of the 50S ribosomal subunit.

One of the primary rRNA binding proteins, this protein initially binds near the 5'-end of the 23S rRNA. It is important during the early stages of 50S assembly. It makes multiple contacts with different domains of the 23S rRNA in the assembled 50S subunit and ribosome. Its function is as follows. Forms part of the polypeptide exit tunnel. The sequence is that of Large ribosomal subunit protein uL4 from Bacillus pumilus (strain SAFR-032).